A 413-amino-acid polypeptide reads, in one-letter code: Enolase (413 aa).

Gln170 serves as a coordination point for (2R)-2-phosphoglycerate. The active-site Proton donor is the Glu212. Positions 245, 286, and 313 each coordinate Mg(2+). Residues Lys338, Arg367, Ser368, and Lys389 each contribute to the (2R)-2-phosphoglycerate site. Lys338 (proton acceptor) is an active-site residue.

The protein belongs to the enolase family. Requires Mg(2+) as cofactor.

It localises to the cytoplasm. The protein localises to the secreted. Its subcellular location is the cell surface. It catalyses the reaction (2R)-2-phosphoglycerate = phosphoenolpyruvate + H2O. Its pathway is carbohydrate degradation; glycolysis; pyruvate from D-glyceraldehyde 3-phosphate: step 4/5. Catalyzes the reversible conversion of 2-phosphoglycerate (2-PG) into phosphoenolpyruvate (PEP). It is essential for the degradation of carbohydrates via glycolysis. In Neorickettsia sennetsu (strain ATCC VR-367 / Miyayama) (Ehrlichia sennetsu), this protein is Enolase.